A 231-amino-acid polypeptide reads, in one-letter code: 7-cyano-7-deazaguanine synthase (231 aa).

11 to 21 provides a ligand contact to ATP; sequence LSAGLDSTVNA. Residues Cys-197, Cys-205, Cys-208, and Cys-211 each contribute to the Zn(2+) site.

The protein belongs to the QueC family. Requires Zn(2+) as cofactor.

The enzyme catalyses 7-carboxy-7-deazaguanine + NH4(+) + ATP = 7-cyano-7-deazaguanine + ADP + phosphate + H2O + H(+). The protein operates within purine metabolism; 7-cyano-7-deazaguanine biosynthesis. In terms of biological role, catalyzes the ATP-dependent conversion of 7-carboxy-7-deazaguanine (CDG) to 7-cyano-7-deazaguanine (preQ(0)). The protein is 7-cyano-7-deazaguanine synthase of Bdellovibrio bacteriovorus (strain ATCC 15356 / DSM 50701 / NCIMB 9529 / HD100).